Consider the following 876-residue polypeptide: Alanine--tRNA ligase (876 aa).

N6-acetyllysine is present on Lys74. Residues His564, His568, Cys666, and His670 each contribute to the Zn(2+) site.

The protein belongs to the class-II aminoacyl-tRNA synthetase family. Homotetramer. Zn(2+) is required as a cofactor.

Its subcellular location is the cytoplasm. The catalysed reaction is tRNA(Ala) + L-alanine + ATP = L-alanyl-tRNA(Ala) + AMP + diphosphate. Catalyzes the attachment of alanine to tRNA(Ala) in a two-step reaction: alanine is first activated by ATP to form Ala-AMP and then transferred to the acceptor end of tRNA(Ala). Also edits incorrectly charged Ser-tRNA(Ala) and Gly-tRNA(Ala) via its editing domain. This Shigella dysenteriae serotype 1 (strain Sd197) protein is Alanine--tRNA ligase.